The primary structure comprises 660 residues: Bifunctional polymyxin resistance protein ArnA (660 aa).

The interval 1–304 (MKTVVFAYHD…TLGLVQGSRL (304 aa)) is formyltransferase ArnAFT. Residue 86 to 88 (HLI) participates in (6R)-10-formyltetrahydrofolate binding. The Proton donor; for formyltransferase activity role is filled by His104. (6R)-10-formyltetrahydrofolate-binding positions include Arg114 and 136–140 (VKRAD). A dehydrogenase ArnADH region spans residues 314 to 660 (RRTRVLILGV…RTVDLTDKPS (347 aa)). NAD(+) is bound by residues Asp347 and 368–369 (DI). Residues Ala393, Tyr398, and 432–433 (TS) contribute to the UDP-alpha-D-glucuronate site. Residue Glu434 is the Proton acceptor; for decarboxylase activity of the active site. UDP-alpha-D-glucuronate contacts are provided by residues Arg460, Asn492, 526–535 (KLIDGGKQKR), and Tyr613. Arg619 functions as the Proton donor; for decarboxylase activity in the catalytic mechanism.

The protein in the N-terminal section; belongs to the Fmt family. UDP-L-Ara4N formyltransferase subfamily. This sequence in the C-terminal section; belongs to the NAD(P)-dependent epimerase/dehydratase family. UDP-glucuronic acid decarboxylase subfamily. Homohexamer, formed by a dimer of trimers.

The enzyme catalyses UDP-alpha-D-glucuronate + NAD(+) = UDP-beta-L-threo-pentopyranos-4-ulose + CO2 + NADH. It carries out the reaction UDP-4-amino-4-deoxy-beta-L-arabinose + (6R)-10-formyltetrahydrofolate = UDP-4-deoxy-4-formamido-beta-L-arabinose + (6S)-5,6,7,8-tetrahydrofolate + H(+). It functions in the pathway nucleotide-sugar biosynthesis; UDP-4-deoxy-4-formamido-beta-L-arabinose biosynthesis; UDP-4-deoxy-4-formamido-beta-L-arabinose from UDP-alpha-D-glucuronate: step 1/3. Its pathway is nucleotide-sugar biosynthesis; UDP-4-deoxy-4-formamido-beta-L-arabinose biosynthesis; UDP-4-deoxy-4-formamido-beta-L-arabinose from UDP-alpha-D-glucuronate: step 3/3. The protein operates within bacterial outer membrane biogenesis; lipopolysaccharide biosynthesis. In terms of biological role, bifunctional enzyme that catalyzes the oxidative decarboxylation of UDP-glucuronic acid (UDP-GlcUA) to UDP-4-keto-arabinose (UDP-Ara4O) and the addition of a formyl group to UDP-4-amino-4-deoxy-L-arabinose (UDP-L-Ara4N) to form UDP-L-4-formamido-arabinose (UDP-L-Ara4FN). The modified arabinose is attached to lipid A and is required for resistance to polymyxin and cationic antimicrobial peptides. The sequence is that of Bifunctional polymyxin resistance protein ArnA from Escherichia coli (strain SE11).